The chain runs to 177 residues: Large ribosomal subunit protein uL6 (177 aa).

This sequence belongs to the universal ribosomal protein uL6 family. Part of the 50S ribosomal subunit.

In terms of biological role, this protein binds to the 23S rRNA, and is important in its secondary structure. It is located near the subunit interface in the base of the L7/L12 stalk, and near the tRNA binding site of the peptidyltransferase center. The polypeptide is Large ribosomal subunit protein uL6 (Leptothrix cholodnii (strain ATCC 51168 / LMG 8142 / SP-6) (Leptothrix discophora (strain SP-6))).